We begin with the raw amino-acid sequence, 282 residues long: Transformer-2 protein homolog alpha (282 aa).

The disordered stretch occupies residues 1–118 (MSDVEENNFE…TGSRANPDPN (118 aa)). An N-acetylserine modification is found at Ser-2. A phosphoserine mark is found at Ser-2 and Ser-14. Thr-24 carries the post-translational modification Phosphothreonine. A compositionally biased stretch (basic residues) spans 51 to 84 (RSRSKSRSRSRRHSHRRYTRSRSHSHSHRRRSRS). Phosphoserine occurs at positions 82, 84, and 86. Phosphothreonine is present on Thr-88. The segment covering 92–110 (RRRRSRSHSPMSNRRRHTG) has biased composition (basic residues). Residues Ser-96 and Ser-98 each carry the phosphoserine modification. Residues 119–197 (TCLGVFGLSL…RRIRVDYSIT (79 aa)) form the RRM domain. Lys-198 is covalently cross-linked (Glycyl lysine isopeptide (Lys-Gly) (interchain with G-Cter in SUMO2)). A linker region spans residues 198–225 (KRAHTPTPGIYMGRPTHSGGGGGGGGGG). Disordered regions lie at residues 201–245 (HTPT…YDRG) and 260–282 (SPSPYYSRYRSRSRSRSYSPRRY). A phosphothreonine mark is found at Thr-202 and Thr-204. Residues 215-230 (SGGGGGGGGGGGGGGG) are compositionally biased toward gly residues. Arg-232 is modified (omega-N-methylarginine). Basic and acidic residues predominate over residues 232–245 (RRRDSYYDRGYDRG). Position 236 is a phosphoserine (Ser-236). Positions 268-282 (YRSRSRSRSYSPRRY) are enriched in basic residues.

This sequence belongs to the splicing factor SR family. In terms of assembly, binds to A3 enhancer proteins SRp75, SRp55, SRp40 and SRp30. Interacts with ILDR1 (via C-terminus) and ILDR2. Post-translationally, phosphorylated in the RS domains.

It localises to the nucleus. Sequence-specific RNA-binding protein which participates in the control of pre-mRNA splicing. This is Transformer-2 protein homolog alpha from Homo sapiens (Human).